The following is a 342-amino-acid chain: Ketoreductase nvfG (342 aa).

Belongs to the NAD(P)-dependent epimerase/dehydratase family. Dihydroflavonol-4-reductase subfamily.

Its pathway is secondary metabolite biosynthesis; terpenoid biosynthesis. Its function is as follows. Ketoreductase; part of the gene cluster that mediates the biosynthesis of novofumigatonin, a heavily oxygenated meroterpenoid containing a unique orthoester moiety. The first step of the pathway is the synthesis of 3,5-dimethylorsellinic acid (DMOA) by the polyketide synthase nvfA via condensation of one acetyl-CoA starter unit with 3 malonyl-CoA units and 2 methylations. DMOA is then converted to farnesyl-DMOA by the farnesyltransferase nvfB. Epoxydation by FAD-dependent monooxygenase nvfK, followed by a protonation-initiated cyclization catalyzed by the terpene cyclase nvfL leads to the production of asnavolin H. The short chain dehydrogenase nvfC then as a 3-OH dehydrogenase of asnovolin H to yield chemesin D. There are two branches to synthesize asnovolin A from chemesin D. In one branch, chemesin D undergoes Baeyer-Villiger oxidation by nvfH, methylation by nvfJ, and enoyl reduction by the nvfM D enoylreductase that reduces the double bond between C-5'and C-6', to form respectively asnovolin I, asnovolin K, and asnovolin A. In the other branch, the methylation precedes the Baeyer-Villiger oxidation and the enoyl reduction to yield asnovolin A via the asnovolin J intermediate. Asnovolin A is further converted to fumigatonoid A by the Fe(II)/2-oxoglutarate-dependent dioxygenase nvfI that catalyzes an endoperoxidation reaction. The alpha/beta hydrolase nvfD then acts as an epimerase that converts fumigatonoid A to its C-5' epimer, which then undergoes spontaneous or nvfD-catalyzed lactonization. The following step utilizes the ketoreductase nvfG to produce fumigatonoid B. The dioxygenase nvfE further converts fumigatonoid B into fumigatonoid C. Finally the Fe(II)/2-oxoglutarate-dependent dioxygenase nvfF catalyzes two rounds of oxidation to transform fumigatonoid C into the end product, novofumigatonin A. The sequence is that of Ketoreductase nvfG from Aspergillus novofumigatus (strain IBT 16806).